The chain runs to 73 residues: Translation initiation factor IF-1 (73 aa).

The S1-like domain occupies 1–73 (MSEKEAGIEV…SRGRITYRDK (73 aa)).

This sequence belongs to the IF-1 family. In terms of assembly, component of the 30S ribosomal translation pre-initiation complex which assembles on the 30S ribosome in the order IF-2 and IF-3, IF-1 and N-formylmethionyl-tRNA(fMet); mRNA recruitment can occur at any time during PIC assembly.

It localises to the cytoplasm. Its function is as follows. One of the essential components for the initiation of protein synthesis. Stabilizes the binding of IF-2 and IF-3 on the 30S subunit to which N-formylmethionyl-tRNA(fMet) subsequently binds. Helps modulate mRNA selection, yielding the 30S pre-initiation complex (PIC). Upon addition of the 50S ribosomal subunit IF-1, IF-2 and IF-3 are released leaving the mature 70S translation initiation complex. The protein is Translation initiation factor IF-1 of Anaeromyxobacter dehalogenans (strain 2CP-C).